The sequence spans 121 residues: Small ribosomal subunit protein bS6 (121 aa).

Residues Asp-96 to Ala-121 are disordered. The segment covering Thr-105–Gln-115 has biased composition (basic and acidic residues).

Belongs to the bacterial ribosomal protein bS6 family.

Binds together with bS18 to 16S ribosomal RNA. In Albidiferax ferrireducens (strain ATCC BAA-621 / DSM 15236 / T118) (Rhodoferax ferrireducens), this protein is Small ribosomal subunit protein bS6.